Reading from the N-terminus, the 366-residue chain is tRNA/tmRNA (uracil-C(5))-methyltransferase (366 aa).

S-adenosyl-L-methionine is bound by residues Gln-190, Tyr-218, Asn-223, Glu-239, and Asp-299. The Nucleophile role is filled by Cys-324. The Proton acceptor role is filled by Glu-358.

The protein belongs to the class I-like SAM-binding methyltransferase superfamily. RNA M5U methyltransferase family. TrmA subfamily.

The catalysed reaction is uridine(54) in tRNA + S-adenosyl-L-methionine = 5-methyluridine(54) in tRNA + S-adenosyl-L-homocysteine + H(+). It carries out the reaction uridine(341) in tmRNA + S-adenosyl-L-methionine = 5-methyluridine(341) in tmRNA + S-adenosyl-L-homocysteine + H(+). In terms of biological role, dual-specificity methyltransferase that catalyzes the formation of 5-methyluridine at position 54 (m5U54) in all tRNAs, and that of position 341 (m5U341) in tmRNA (transfer-mRNA). The polypeptide is tRNA/tmRNA (uracil-C(5))-methyltransferase (Escherichia coli O157:H7).